A 486-amino-acid polypeptide reads, in one-letter code: Alliin lyase 1 (486 aa).

Positions 1–28 (MVESYKKIGSCNKMPCLVILTCIIMSNS) are cleaved as a signal peptide. The propeptide occupies 29–38 (LVNNNNMVQA). One can recognise an EGF-like; atypical domain in the interval 51–97 (EAVANINCSEHGRAFLDGIISEGSPKCECNTCYTGPDCSEKIQGCSA). N57 is a glycosylation site (N-linked (GlcNAc...) asparagine). 3 cysteine pairs are disulfide-bonded: C58–C77, C79–C88, and C82–C95. A chloride-binding site is contributed by 130 to 138 (YFFNPVSNF). N-linked (GlcNAc...) asparagine glycans are attached at residues N184 and N229. K289 bears the N6-(pyridoxal phosphate)lysine mark. N366 is a glycosylation site (N-linked (GlcNAc...) asparagine). An intrachain disulfide couples C406 to C414.

Belongs to the alliinase family. In terms of assembly, homodimer. Pyridoxal 5'-phosphate serves as cofactor. In terms of tissue distribution, expressed in bulb (at protein level). Expressed in shoots.

It localises to the vacuole. It catalyses the reaction an S-alkyl-L-cysteine S-oxide = an S-alkyl sulfenate + 2-aminoprop-2-enoate. Functionally, able to cleave the C-S bond of sulfoxide derivatives of Cys to produce allicin, thus giving rise to all sulfur compounds which are responsible for most of the properties of garlic, such as the specific smell and flavor as well as the health benefits like blood lipid or blood pressure lowering. The polypeptide is Alliin lyase 1 (Allium sativum (Garlic)).